Reading from the N-terminus, the 180-residue chain is ADP-ribosylation factor-like protein 1 (180 aa).

The N-myristoyl glycine moiety is linked to residue Gly-2. GTP contacts are provided by residues 23 to 30 (GLDGAGKT), 66 to 70 (DLGGQ), and 125 to 128 (NKQD).

This sequence belongs to the small GTPase superfamily. Arf family.

Its function is as follows. GTP-binding protein involved in protein trafficking; may modulate vesicle budding and uncoating within the Golgi apparatus. This is ADP-ribosylation factor-like protein 1 (Arl1) from Drosophila melanogaster (Fruit fly).